The primary structure comprises 253 residues: RBPJ-interacting and tubulin-associated protein 1 (253 aa).

Disordered stretches follow at residues 30-89 (SPAR…KNKY), 127-175 (TPPA…LCVP), and 188-253 (HLTV…PPWK). Positions 71 to 81 (SPSSRGSTPNL) are enriched in polar residues. The Nuclear localization signal motif lies at 81-97 (LTPRKKNKYRLIGHAPS). An interaction with RBPJ/RBPSUH region spans residues 112–140 (RMAVGDAAKLRTLFWTPPATPRGSHTPCP). The tract at residues 140 to 253 (PRETPLRAIH…CPPKPKPPWK (114 aa)) is interaction with tubulin. The segment covering 188 to 228 (HLTVPSTGHPASSAPQTNGPWSPRPNTSGATVQSPLVTSKA) has biased composition (polar residues).

The protein belongs to the RITA family. As to quaternary structure, interacts with RBPJ/RBPSUH.

The protein resides in the cytoplasm. It is found in the nucleus. Its subcellular location is the cytoskeleton. It localises to the microtubule organizing center. The protein localises to the centrosome. Functionally, tubulin-binding protein that acts as a negative regulator of Notch signaling pathway. Shuttles between the cytoplasm and the nucleus and mediates the nuclear export of RBPJ/RBPSUH, thereby preventing the interaction between RBPJ/RBPSUH and NICD product of Notch proteins (Notch intracellular domain), leading to down-regulate Notch-mediated transcription. May play a role in neurogenesis. This is RBPJ-interacting and tubulin-associated protein 1 (Rita1) from Mus musculus (Mouse).